Here is a 106-residue protein sequence, read N- to C-terminus: Thiosulfate sulfurtransferase GlpE (106 aa).

In terms of domain architecture, Rhodanese spans serine 17–alanine 105. Cysteine 65 acts as the Cysteine persulfide intermediate in catalysis.

Belongs to the GlpE family.

The protein localises to the cytoplasm. The catalysed reaction is thiosulfate + hydrogen cyanide = thiocyanate + sulfite + 2 H(+). The enzyme catalyses thiosulfate + [thioredoxin]-dithiol = [thioredoxin]-disulfide + hydrogen sulfide + sulfite + 2 H(+). Its function is as follows. Transferase that catalyzes the transfer of sulfur from thiosulfate to thiophilic acceptors such as cyanide or dithiols. May function in a CysM-independent thiosulfate assimilation pathway by catalyzing the conversion of thiosulfate to sulfite, which can then be used for L-cysteine biosynthesis. In Vibrio vulnificus (strain CMCP6), this protein is Thiosulfate sulfurtransferase GlpE.